Reading from the N-terminus, the 343-residue chain is Probable potassium channel protein 2 (343 aa).

Topologically, residues 1–7 are cytoplasmic; the sequence is METSKKL. A helical membrane pass occupies residues 8 to 28; sequence VIVAVLSITLILTYAYLISII. Residues 29–61 lie on the Extracellular side of the membrane; it reads EGVDYFTALYFSVITITTTGYGDFTPKTFLGRT. A Selectivity filter motif is present at residues 46–51; it reads TTGYGD. Residues 62 to 82 form a helical membrane-spanning segment; sequence LTVVYLCVGVGIVMYLFSLIA. At 83 to 343 the chain is on the cytoplasmic side; sequence EFIVEGKFEE…NLVKKKKKKL (261 aa). The 121-residue stretch at 107-227 folds into the RCK N-terminal domain; the sequence is KDHYIICGYG…KIAGANRVVS (121 aa). The 86-residue stretch at 253–338 folds into the RCK C-terminal domain; the sequence is IKIAKDEYEE…LKYLENLVKK (86 aa).

The protein resides in the cell membrane. Functionally, probable potassium channel protein. This is Probable potassium channel protein 2 from Methanocaldococcus jannaschii (strain ATCC 43067 / DSM 2661 / JAL-1 / JCM 10045 / NBRC 100440) (Methanococcus jannaschii).